We begin with the raw amino-acid sequence, 201 residues long: 3-isopropylmalate dehydratase small subunit (201 aa).

This sequence belongs to the LeuD family. LeuD type 1 subfamily. Heterodimer of LeuC and LeuD.

It carries out the reaction (2R,3S)-3-isopropylmalate = (2S)-2-isopropylmalate. Its pathway is amino-acid biosynthesis; L-leucine biosynthesis; L-leucine from 3-methyl-2-oxobutanoate: step 2/4. Functionally, catalyzes the isomerization between 2-isopropylmalate and 3-isopropylmalate, via the formation of 2-isopropylmaleate. The sequence is that of 3-isopropylmalate dehydratase small subunit from Pasteurella multocida (strain Pm70).